Here is a 112-residue protein sequence, read N- to C-terminus: Ribosome-binding factor A (112 aa).

It belongs to the RbfA family. Monomer. Binds 30S ribosomal subunits, but not 50S ribosomal subunits or 70S ribosomes.

It is found in the cytoplasm. Its function is as follows. One of several proteins that assist in the late maturation steps of the functional core of the 30S ribosomal subunit. Associates with free 30S ribosomal subunits (but not with 30S subunits that are part of 70S ribosomes or polysomes). Required for efficient processing of 16S rRNA. May interact with the 5'-terminal helix region of 16S rRNA. This is Ribosome-binding factor A from Ruthia magnifica subsp. Calyptogena magnifica.